Consider the following 196-residue polypeptide: N-(5'-phosphoribosyl)anthranilate isomerase (196 aa).

The protein belongs to the TrpF family.

The enzyme catalyses N-(5-phospho-beta-D-ribosyl)anthranilate = 1-(2-carboxyphenylamino)-1-deoxy-D-ribulose 5-phosphate. It functions in the pathway amino-acid biosynthesis; L-tryptophan biosynthesis; L-tryptophan from chorismate: step 3/5. This chain is N-(5'-phosphoribosyl)anthranilate isomerase, found in Nitratiruptor sp. (strain SB155-2).